Consider the following 480-residue polypeptide: RNA-binding protein 42 (480 aa).

A disordered region spans residues 1-30 (MAGAGPAPGLPGAGGPVVPGPGAGIPGKSG). N-acetylalanine is present on Ala2. A compositionally biased stretch (gly residues) spans 11 to 27 (PGAGGPVVPGPGAGIPG). A Phosphoserine modification is found at Ser135. Residues Arg153, Arg158, Arg168, and Arg181 each carry the asymmetric dimethylarginine modification. Positions 236-480 (ELGLGLGLGL…QKEKKKLGLR (245 aa)) are necessary for interaction with HNRNPK. The interval 319-356 (SLRPRPRPPRPEPPPGLMALEVPEPLGEDKKKGKPEKL) is disordered. Over residues 345–356 (GEDKKKGKPEKL) the composition is skewed to basic and acidic residues. Positions 381–459 (FRIFCGDLGN…RPIKLRKSMW (79 aa)) constitute an RRM domain.

This sequence belongs to the RRM RBM42 family. In terms of assembly, interacts with HNRNPK.

Its subcellular location is the nucleus. The protein resides in the cytoplasm. Functionally, binds (via the RRM domain) to the 3'-untranslated region (UTR) of CDKN1A mRNA. The protein is RNA-binding protein 42 (RBM42) of Homo sapiens (Human).